The chain runs to 438 residues: Telomeric repeat-binding factor 1 (438 aa).

Residues 1–10 (MAEDVSSTAP) show a composition bias toward polar residues. Residues 1-36 (MAEDVSSTAPSPRGCADGRDADPTEEQMAQTQRNDQ) are disordered. Ala2 carries the post-translational modification N-acetylalanine. Residue Ser11 is modified to Phosphoserine. Residues 58–268 (EEEEEDSGLV…AAAKVVESKR (211 aa)) are TRFH dimerization. A Glycyl lysine isopeptide (Lys-Gly) (interchain with G-Cter in SUMO2) cross-link involves residue Lys213. Ser219 is modified (phosphoserine; by ATM). The interval 265–378 (ESKRTRTITS…PVTPEKHRAR (114 aa)) is interaction with RLIM. The segment at 268 to 311 (RTRTITSQDKPSGNDVEMETEANLDTRKSVSDKQSAVTESSEGT) is disordered. Residues 299-311 (DKQSAVTESSEGT) show a composition bias toward polar residues. A Glycyl lysine isopeptide (Lys-Gly) (interchain with G-Cter in SUMO2) cross-link involves residue Lys325. The disordered stretch occupies residues 326-375 (LQHGTQQQDLNKKERRVGTPQSTKKKKESRRATESRIPVSKSQPVTPEKH). Positions 337-356 (KKERRVGTPQSTKKKKESRR) match the Nuclear localization signal motif. Lys366 is covalently cross-linked (Glycyl lysine isopeptide (Lys-Gly) (interchain with G-Cter in SUMO2)). The region spanning 375–432 (HRARKRQAWLWEEDKNLRSGVRKYGEGNWSKILLHYKFNNRTSVMLKDRWRTMKKLKL) is the HTH myb-type domain. A DNA-binding region (H-T-H motif) is located at residues 403–428 (WSKILLHYKFNNRTSVMLKDRWRTMK).

As to quaternary structure, homodimer; can contain both isoforms. Found in a complex with POT1; TINF2 and TNKS1. Interacts with ATM, TINF2, TNKS1, TNKS2, PINX1, NEK2 and MAPRE1. Component of the shelterin complex (telosome) composed of TERF1, TERF2, TINF2, TERF2IP ACD and POT1. Interacts with RLIM (via N-terminus). Interacts with FBXO4. Interaction with TINF2 protects against interaction with FBXO4 and subsequent polyubiquitination and proteasomal degradation. Interacts with GNL3L; this interaction promotes homodimerization. Interacts with TIN2. Interactions with GNL3L and TIN2 are mutually exclusive. Interacts with RTEL1. Interacts with CCDC79/TERB1. Post-translationally, phosphorylated preferentially on Ser-219 in an ATM-dependent manner in response to ionizing DNA damage. In terms of processing, ADP-ribosylation by TNKS1 or TNKS2 diminishes its ability to bind to telomeric DNA. Ubiquitinated by RLIM/RNF12, leading to its degradation by the proteasome. Ubiquitinated by a SCF (SKP1-CUL1-F-box protein) ubiquitin-protein ligase complex, leading to its degradation by the proteasome.

The protein localises to the nucleus. The protein resides in the chromosome. It localises to the telomere. Its subcellular location is the cytoplasm. It is found in the cytoskeleton. The protein localises to the spindle. In terms of biological role, binds the telomeric double-stranded 5'-TTAGGG-3' repeat and negatively regulates telomere length. Involved in the regulation of the mitotic spindle. Component of the shelterin complex (telosome) that is involved in the regulation of telomere length and protection. Shelterin associates with arrays of double-stranded 5'-TTAGGG-3' repeats added by telomerase and protects chromosome ends; without its protective activity, telomeres are no longer hidden from the DNA damage surveillance and chromosome ends are inappropriately processed by DNA repair pathways. This Cricetulus griseus (Chinese hamster) protein is Telomeric repeat-binding factor 1 (TERF1).